The primary structure comprises 188 residues: Elongation factor P (188 aa).

This sequence belongs to the elongation factor P family.

It localises to the cytoplasm. It functions in the pathway protein biosynthesis; polypeptide chain elongation. Functionally, involved in peptide bond synthesis. Stimulates efficient translation and peptide-bond synthesis on native or reconstituted 70S ribosomes in vitro. Probably functions indirectly by altering the affinity of the ribosome for aminoacyl-tRNA, thus increasing their reactivity as acceptors for peptidyl transferase. The protein is Elongation factor P of Rickettsia peacockii (strain Rustic).